The sequence spans 98 residues: (4S)-4-hydroxy-5-phosphonooxypentane-2,3-dione isomerase (98 aa).

Residues 2–91 enclose the ABM domain; the sequence is NVTLVEINIK…MSQPRQKRSF (90 aa).

This sequence belongs to the LsrG family. As to quaternary structure, homodimer.

It localises to the cytoplasm. The catalysed reaction is (2S)-2-hydroxy-3,4-dioxopentyl phosphate = 3-hydroxy-2,4-dioxopentyl phosphate. Functionally, involved in the degradation of phospho-AI-2, thereby terminating induction of the lsr operon and closing the AI-2 signaling cycle. Catalyzes the conversion of (4S)-4-hydroxy-5-phosphonooxypentane-2,3-dione (P-DPD) to 3-hydroxy-5-phosphonooxypentane-2,4-dione (P-HPD). The sequence is that of (4S)-4-hydroxy-5-phosphonooxypentane-2,3-dione isomerase from Klebsiella pneumoniae subsp. pneumoniae (strain ATCC 700721 / MGH 78578).